The primary structure comprises 240 residues: UDP-2,3-diacylglucosamine hydrolase (240 aa).

Mn(2+)-binding residues include aspartate 8, histidine 10, aspartate 41, asparagine 79, and histidine 114. 79–80 provides a ligand contact to substrate; that stretch reads NR. 5 residues coordinate substrate: aspartate 122, serine 160, asparagine 164, lysine 167, and histidine 195. Histidine 195 and histidine 197 together coordinate Mn(2+).

The protein belongs to the LpxH family. It depends on Mn(2+) as a cofactor.

It localises to the cell inner membrane. It carries out the reaction UDP-2-N,3-O-bis[(3R)-3-hydroxytetradecanoyl]-alpha-D-glucosamine + H2O = 2-N,3-O-bis[(3R)-3-hydroxytetradecanoyl]-alpha-D-glucosaminyl 1-phosphate + UMP + 2 H(+). Its pathway is glycolipid biosynthesis; lipid IV(A) biosynthesis; lipid IV(A) from (3R)-3-hydroxytetradecanoyl-[acyl-carrier-protein] and UDP-N-acetyl-alpha-D-glucosamine: step 4/6. Hydrolyzes the pyrophosphate bond of UDP-2,3-diacylglucosamine to yield 2,3-diacylglucosamine 1-phosphate (lipid X) and UMP by catalyzing the attack of water at the alpha-P atom. Involved in the biosynthesis of lipid A, a phosphorylated glycolipid that anchors the lipopolysaccharide to the outer membrane of the cell. The protein is UDP-2,3-diacylglucosamine hydrolase of Enterobacter sp. (strain 638).